The primary structure comprises 252 residues: Triosephosphate isomerase (252 aa).

10-12 (NWK) lines the substrate pocket. Histidine 96 (electrophile) is an active-site residue. Residue glutamate 168 is the Proton acceptor of the active site. Substrate is bound by residues glycine 174, serine 214, and 235–236 (GG).

This sequence belongs to the triosephosphate isomerase family. Homodimer.

The protein localises to the cytoplasm. It catalyses the reaction D-glyceraldehyde 3-phosphate = dihydroxyacetone phosphate. The protein operates within carbohydrate biosynthesis; gluconeogenesis. It participates in carbohydrate degradation; glycolysis; D-glyceraldehyde 3-phosphate from glycerone phosphate: step 1/1. Its function is as follows. Involved in the gluconeogenesis. Catalyzes stereospecifically the conversion of dihydroxyacetone phosphate (DHAP) to D-glyceraldehyde-3-phosphate (G3P). In Lactobacillus delbrueckii subsp. bulgaricus (strain ATCC 11842 / DSM 20081 / BCRC 10696 / JCM 1002 / NBRC 13953 / NCIMB 11778 / NCTC 12712 / WDCM 00102 / Lb 14), this protein is Triosephosphate isomerase.